A 608-amino-acid chain; its full sequence is Granule-bound starch synthase 1, chloroplastic/amyloplastic (608 aa).

A chloroplast-targeting transit peptide spans methionine 1–valine 76. Lysine 96 contacts ADP-alpha-D-glucose.

This sequence belongs to the glycosyltransferase 1 family. Bacterial/plant glycogen synthase subfamily.

Its subcellular location is the plastid. The protein resides in the chloroplast. It is found in the amyloplast. The enzyme catalyses an NDP-alpha-D-glucose + [(1-&gt;4)-alpha-D-glucosyl](n) = [(1-&gt;4)-alpha-D-glucosyl](n+1) + a ribonucleoside 5'-diphosphate + H(+). It participates in glycan biosynthesis; starch biosynthesis. Its function is as follows. Required for the synthesis of amylose. The polypeptide is Granule-bound starch synthase 1, chloroplastic/amyloplastic (WAXY) (Ipomoea batatas (Sweet potato)).